The chain runs to 318 residues: Galactose-1-phosphate uridylyltransferase (318 aa).

Residues cysteine 32, cysteine 35, and histidine 90 each contribute to the Zn(2+) site. UDP-alpha-D-glucose is bound at residue asparagine 130. Residue histidine 141 participates in Zn(2+) binding. Histidine 143 (tele-UMP-histidine intermediate) is an active-site residue. Residue glutamine 145 participates in UDP-alpha-D-glucose binding.

It belongs to the galactose-1-phosphate uridylyltransferase type 1 family. Zn(2+) serves as cofactor.

The enzyme catalyses alpha-D-galactose 1-phosphate + UDP-alpha-D-glucose = alpha-D-glucose 1-phosphate + UDP-alpha-D-galactose. It functions in the pathway carbohydrate metabolism; galactose metabolism. The sequence is that of Galactose-1-phosphate uridylyltransferase (galT) from Thermotoga maritima (strain ATCC 43589 / DSM 3109 / JCM 10099 / NBRC 100826 / MSB8).